A 353-amino-acid polypeptide reads, in one-letter code: Uroporphyrinogen decarboxylase (353 aa).

Substrate contacts are provided by residues 27 to 31, Phe-46, Asp-76, Tyr-152, Ser-207, and His-321; that span reads RQAGR.

It belongs to the uroporphyrinogen decarboxylase family. As to quaternary structure, homodimer.

The protein resides in the cytoplasm. It catalyses the reaction uroporphyrinogen III + 4 H(+) = coproporphyrinogen III + 4 CO2. It participates in porphyrin-containing compound metabolism; protoporphyrin-IX biosynthesis; coproporphyrinogen-III from 5-aminolevulinate: step 4/4. Functionally, catalyzes the decarboxylation of four acetate groups of uroporphyrinogen-III to yield coproporphyrinogen-III. The polypeptide is Uroporphyrinogen decarboxylase (Listeria monocytogenes serotype 4b (strain CLIP80459)).